The chain runs to 1694 residues: Clathrin heavy chain (1694 aa).

A globular terminal domain region spans residues 1–478 (MTNLPIRFQE…HDRKLALSIY (478 aa)). 7 WD40-like repeat regions span residues 23-67 (SIGF…KQMK), 68-107 (TDAA…MQEP), 108-149 (LEFW…PDLQ), 150-195 (NTEI…QSIE), 196-256 (GHAA…EIGA), 257-300 (SDFP…ISNE), and 301-329 (NIFV…VSID). A binding site for the uncoating ATPase, involved in lattice disassembly region spans residues 448–464 (EKWLTEDKLECSEQLGD). Positions 479–522 (YRANASDKVITLFAETGEFDKIIAYCKKFNYKPDFMFLLQRMAN) are flexible linker. The heavy chain arm stretch occupies residues 523-1694 (ANPMGAADFA…QQNYNQYGGF (1172 aa)). CHCR repeat units follow at residues 537–681 (KEEG…QNLQ), 687–829 (AVSY…QEDY), 834–973 (IMSV…SLID), 980–1125 (LPES…VKEC), 1129–1270 (FIKA…FRLA), 1275–1421 (INII…LLIN), and 1424–1567 (LSVL…NSAF). Positions 1214–1523 (AAKVLYTNIS…YLYKKNNRWA (310 aa)) are involved in binding clathrin light chain. Positions 1551-1694 (GEELLQYFVD…QQNYNQYGGF (144 aa)) are trimerization. Residues 1610 to 1640 (KVDQLVDDFKARQKKTEEEKEQQNIESSQYQ) adopt a coiled-coil conformation.

This sequence belongs to the clathrin heavy chain family. In terms of assembly, clathrin coats are formed from molecules containing 3 heavy chains and 3 light chains.

It localises to the cytoplasmic vesicle membrane. The protein localises to the membrane. Its subcellular location is the coated pit. Functionally, clathrin is the major protein of the polyhedral coat of coated pits and vesicles. The chain is Clathrin heavy chain (chcA) from Dictyostelium discoideum (Social amoeba).